The sequence spans 84 residues: uncharacterized protein (84 aa).

Residues 8–47 (CECCDRDLPPDSGDAMICTFECTFCAGCAETKLGGTCPNC) form a cysteine motif region.

This is an uncharacterized protein from Rhizobium meliloti (strain 1021) (Ensifer meliloti).